A 180-amino-acid chain; its full sequence is MALRIFVTGPAGVGKTTLVERVAREVDRWGYIVGGVITREVRRGGRRIGFKITALDTGEEGTLASLRGTSHLPGVPFGKYVVHVDEIERVAVPAIRRAIVEADLIVIDEIGPMEYTSNEFIRAVGEVLKSEKPLLAVVHRKFIDRFRPLGEVHTLSFENRNAEFGIILDRVMKELKGIRG.

ATP contacts are provided by residues 9 to 16 (GPAGVGKT) and 104 to 111 (LIVIDEIG).

The protein belongs to the THEP1 NTPase family.

It catalyses the reaction a ribonucleoside 5'-triphosphate + H2O = a ribonucleoside 5'-diphosphate + phosphate + H(+). Has nucleotide phosphatase activity towards ATP, GTP, CTP, TTP and UTP. May hydrolyze nucleoside diphosphates with lower efficiency. This Thermococcus kodakarensis (strain ATCC BAA-918 / JCM 12380 / KOD1) (Pyrococcus kodakaraensis (strain KOD1)) protein is Nucleoside-triphosphatase THEP1.